The sequence spans 343 residues: Heat-inducible transcription repressor HrcA (343 aa).

This sequence belongs to the HrcA family.

Negative regulator of class I heat shock genes (grpE-dnaK-dnaJ and groELS operons). Prevents heat-shock induction of these operons. The protein is Heat-inducible transcription repressor HrcA of Mycobacterium leprae (strain Br4923).